The sequence spans 206 residues: dCTP deaminase, dUMP-forming (206 aa).

Residues 117–122 (RSSFGR), D135, 143–145 (TLE), Q163, Y177, K184, and Q188 each bind dCTP. Residue E145 is the Proton donor/acceptor of the active site.

Belongs to the dCTP deaminase family. Homotrimer.

The enzyme catalyses dCTP + 2 H2O = dUMP + NH4(+) + diphosphate. The protein operates within pyrimidine metabolism; dUMP biosynthesis; dUMP from dCTP: step 1/1. Functionally, bifunctional enzyme that catalyzes both the deamination of dCTP to dUTP and the hydrolysis of dUTP to dUMP without releasing the toxic dUTP intermediate. This chain is dCTP deaminase, dUMP-forming, found in Methanococcus vannielii (strain ATCC 35089 / DSM 1224 / JCM 13029 / OCM 148 / SB).